A 435-amino-acid chain; its full sequence is Glutamine synthetase (435 aa).

The GS beta-grasp domain maps to 12 to 94 (KGVKYFMISY…VAADCIMDDA (83 aa)). In terms of domain architecture, GS catalytic spans 100–435 (PRVVLKKLVA…EWEHQTTLDV (336 aa)). E123, E125, E180, and E187 together coordinate Mg(2+). G232 serves as a coordination point for L-glutamate. H236 is a Mg(2+) binding site. S240 provides a ligand contact to ATP. Residues R291 and R315 each coordinate L-glutamate. Positions 315 and 320 each coordinate ATP. E328 provides a ligand contact to Mg(2+). Residue R330 participates in L-glutamate binding.

This sequence belongs to the glutamine synthetase family. Homooctamer. Mg(2+) serves as cofactor.

The catalysed reaction is L-glutamate + NH4(+) + ATP = L-glutamine + ADP + phosphate + H(+). With respect to regulation, inhibited by methionine sulfoximine, ADP and pyrophosphate, but not by various nitrogen-containing metabolites that inhibit other GS enzymes. Its function is as follows. Catalyzes the ATP-dependent biosynthesis of glutamine from glutamate and ammonia. The sequence is that of Glutamine synthetase from Rhizobium meliloti (strain 1021) (Ensifer meliloti).